A 372-amino-acid chain; its full sequence is DNA polymerase delta subunit 3 (372 aa).

2 disordered regions span residues 156–264 (KKAP…NLDS) and 352–372 (KKNT…FGKK). Residues 160 to 173 (STHSPQLSVPSKTS) are compositionally biased toward polar residues. Residue Ser-163 is modified to Phosphoserine. Basic and acidic residues-rich tracts occupy residues 174–190 (TIDK…KGKD) and 209–239 (APLE…DDLK). Residues 355–365 (TAQSKPQQKSI) show a composition bias toward polar residues.

As to quaternary structure, heterotetramer that consist of the pol3, cdc1, cdc27 and cdm1 subunits. Cdc27 interacts with cdc1 and is required for dimerization of the tetramer.

It localises to the nucleus. This Schizosaccharomyces pombe (strain 972 / ATCC 24843) (Fission yeast) protein is DNA polymerase delta subunit 3 (cdc27).